The sequence spans 179 residues: Replication restart protein DnaT (179 aa).

The tract at residues 1–83 is required for trimerization and to bind PriB; the sequence is MSSRILTSHF…FEEPAAAPVA (83 aa). The binds ssDNA stretch occupies residues 84–179; the sequence is VPMGKFAMYA…DSHIPRGFRG (96 aa). The disordered stretch occupies residues 151–179; the sequence is SRASNGGQPKRDVNSVSEPDSHIPRGFRG. Residues 159-173 are compositionally biased toward basic and acidic residues; that stretch reads PKRDVNSVSEPDSHI.

This sequence belongs to the DnaT family. As to quaternary structure, homotrimer. Interacts with PriB. Interacts with PriC. Component of the replication restart primosome. Primosome assembly occurs via a 'hand-off' mechanism. PriA binds to replication forks, subsequently PriB then DnaT bind; DnaT then displaces ssDNA to generate the helicase loading substrate.

Its function is as follows. Involved in the restart of stalled replication forks, which reloads the replicative helicase on sites other than the origin of replication. Can function in multiple replication restart pathways. Displaces ssDNA from a PriB-ssDNA complex. Probably forms a spiral filament on ssDNA. Functionally, binds single-stranded (ss)DNA. The minimal binding site is about 26 +/- 2 nucleotides (nt) per trimer. Two DNA-protein complexes are seen with 55 nt-long ssDNA. This Klebsiella pneumoniae subsp. pneumoniae (strain ATCC 700721 / MGH 78578) protein is Replication restart protein DnaT.